A 248-amino-acid chain; its full sequence is Granzyme B (248 aa).

The signal sequence occupies residues 1–18 (MKLLLLLLSFSLAPKTEA). The propeptide at 19–20 (GE) is activation peptide. Positions 21-246 (IIGGHEAKPH…FLSWIKKTMK (226 aa)) constitute a Peptidase S1 domain. Residues C50 and C66 are joined by a disulfide bond. Residues H65 and D109 each act as charge relay system in the active site. 2 cysteine pairs are disulfide-bonded: C143-C210 and C174-C189. The active-site Charge relay system is S204.

The protein belongs to the peptidase S1 family. Granzyme subfamily.

It localises to the secreted. The protein localises to the cytolytic granule. The enzyme catalyses Preferential cleavage: -Asp-|-Xaa- &gt;&gt; -Asn-|-Xaa- &gt; -Met-|-Xaa-, -Ser-|-Xaa-.. With respect to regulation, inactivated by the serine protease inhibitor diisopropylfluorophosphate. Abundant protease in the cytosolic granules of cytotoxic T-cells and NK-cells which activates caspase-independent pyroptosis when delivered into the target cell through the immunological synapse. It cleaves after Asp. Once delivered into the target cell, acts by catalyzing cleavage of gasdermin-E (GSDME), releasing the pore-forming moiety of GSDME, thereby triggering pyroptosis and target cell death. Seems to be linked to an activation cascade of caspases (aspartate-specific cysteine proteases) responsible for apoptosis execution. Cleaves caspase-3 and -9 (CASP3 and CASP9, respectively) to give rise to active enzymes mediating apoptosis. Cleaves and activates CASP7 in response to bacterial infection, promoting plasma membrane repair. The polypeptide is Granzyme B (Gzmb) (Rattus norvegicus (Rat)).